The following is a 578-amino-acid chain: Multidrug resistance-like ATP-binding protein MdlB (578 aa).

Residues 25-308 (LILGFTLLLF…ITSQQSIFQQ (284 aa)) form the ABC transmembrane type-1 domain. 6 helical membrane-spanning segments follow: residues 26–46 (ILGF…PILI), 59–79 (VNYS…AAIL), 143–163 (SLFQ…ILEW), 166–186 (ACIA…YQYF), 196–216 (VYIA…DVIQ), and 260–280 (LILC…FEIG). Residues 339 to 573 (IKVKNLYFSY…KSYYKNMYYS (235 aa)) form the ABC transporter domain. ATP is bound at residue 373–380 (GRTGSGKS).

This sequence belongs to the ABC transporter superfamily. Drug exporter-2 (TC 3.A.1.117) family.

Its subcellular location is the cell membrane. It catalyses the reaction ATP + H2O + xenobioticSide 1 = ADP + phosphate + xenobioticSide 2.. The protein is Multidrug resistance-like ATP-binding protein MdlB (mdlB) of Buchnera aphidicola subsp. Baizongia pistaciae (strain Bp).